We begin with the raw amino-acid sequence, 335 residues long: Cathepsin B (335 aa).

A signal peptide spans 1-17; the sequence is MWRLLATLSCLVLLTSA. The propeptide at 18 to 79 is activation peptide; sequence RESLHFQPLS…QRAAFAADMI (62 aa). Cystine bridges form between Cys-93–Cys-122, Cys-105–Cys-150, Cys-141–Cys-207, Cys-142–Cys-146, Cys-179–Cys-211, and Cys-187–Cys-198. Cys-108 is an active-site residue. N-linked (GlcNAc...) asparagine glycosylation is present at Asn-192. An N6-acetyllysine modification is found at Lys-220. A disulfide bond links Cys-227 and Cys-331. Active-site residues include His-278 and Asn-298. A propeptide spanning residues 333–335 is cleaved from the precursor; sequence PHF.

The protein belongs to the peptidase C1 family. Dimer of a heavy chain and a light chain cross-linked by a disulfide bond. Interacts with SRPX2. Directly interacts with SHKBP1. Expressed in heart (at protein level).

It is found in the lysosome. Its subcellular location is the melanosome. The protein localises to the secreted. The protein resides in the extracellular space. It localises to the apical cell membrane. The enzyme catalyses Hydrolysis of proteins with broad specificity for peptide bonds. Preferentially cleaves -Arg-Arg-|-Xaa bonds in small molecule substrates (thus differing from cathepsin L). In addition to being an endopeptidase, shows peptidyl-dipeptidase activity, liberating C-terminal dipeptides.. In terms of biological role, thiol protease which is believed to participate in intracellular degradation and turnover of proteins. Cleaves matrix extracellular phosphoglycoprotein MEPE. Involved in the solubilization of cross-linked TG/thyroglobulin in the thyroid follicle lumen. Has also been implicated in tumor invasion and metastasis. This Sus scrofa (Pig) protein is Cathepsin B (CTSB).